The chain runs to 190 residues: Hypoxanthine/guanine phosphoribosyltransferase (190 aa).

The protein belongs to the purine/pyrimidine phosphoribosyltransferase family. Archaeal HPRT subfamily. In terms of assembly, homodimer.

The protein resides in the cytoplasm. The enzyme catalyses IMP + diphosphate = hypoxanthine + 5-phospho-alpha-D-ribose 1-diphosphate. It carries out the reaction GMP + diphosphate = guanine + 5-phospho-alpha-D-ribose 1-diphosphate. The protein operates within purine metabolism; IMP biosynthesis via salvage pathway; IMP from hypoxanthine: step 1/1. Functionally, catalyzes a salvage reaction resulting in the formation of IMP that is energically less costly than de novo synthesis. This chain is Hypoxanthine/guanine phosphoribosyltransferase, found in Methanosalsum zhilinae (strain DSM 4017 / NBRC 107636 / OCM 62 / WeN5) (Methanohalophilus zhilinae).